Reading from the N-terminus, the 410-residue chain is UBX domain-containing protein 3 (410 aa).

Disordered regions lie at residues 46 to 139 (EEDH…PDPK) and 154 to 212 (TISP…EKPL). A compositionally biased stretch (low complexity) spans 65–85 (GSSSGISGGDQQPPRPLQRQQ). Residues 86–97 (NTQGQGMKSGTA) are compositionally biased toward polar residues. A phosphoserine mark is found at Ser-156, Ser-167, and Ser-186. Positions 163–174 (SGPSSLASSWAS) are enriched in low complexity. Residues 183–196 (NEASGSTTPVTQSG) show a composition bias toward polar residues. Residue Thr-190 is modified to Phosphothreonine. The 66-residue stretch at 211-276 (PLRRTLYFWR…VQHRMDEDYV (66 aa)) folds into the SEP domain. A UBX domain is found at 334-410 (ENKPTTRIQV…KNASLVQKSL (77 aa)).

In terms of assembly, interacts with cdc48.

Involved in CDC48-dependent protein degradation through the ubiquitin/proteasome pathway. Involved in delivery of substrates to the 26S proteasome. Also required for membrane fusion and sporulation. The sequence is that of UBX domain-containing protein 3 (ubx3) from Schizosaccharomyces pombe (strain 972 / ATCC 24843) (Fission yeast).